The chain runs to 306 residues: D-alanine--D-alanine ligase B (306 aa).

Active-site residues include E15 and S150. The ATP-grasp domain maps to 101 to 303 (KLLWQGAGLP…FSQLVVRILE (203 aa)). ATP is bound at residue 134 to 189 (ISALGLPVIVKPSREGSSVGMSKVVAENALQDALRLAFQHDEEVLIEKWLSGPEFT). D257, E270, and N272 together coordinate Mg(2+). S281 is a catalytic residue.

The protein belongs to the D-alanine--D-alanine ligase family. In terms of assembly, monomer. Mg(2+) serves as cofactor. It depends on Mn(2+) as a cofactor.

Its subcellular location is the cytoplasm. The enzyme catalyses 2 D-alanine + ATP = D-alanyl-D-alanine + ADP + phosphate + H(+). It participates in cell wall biogenesis; peptidoglycan biosynthesis. Cell wall formation. This is D-alanine--D-alanine ligase B (ddlB) from Escherichia coli (strain K12).